The chain runs to 230 residues: 5'-methylthioadenosine/S-adenosylhomocysteine nucleosidase (230 aa).

The active-site Proton acceptor is the Glu-12. Residues Gly-78, Ile-153, and 174 to 175 (ME) contribute to the substrate site. The Proton donor role is filled by Asp-198.

This sequence belongs to the PNP/UDP phosphorylase family. MtnN subfamily.

It carries out the reaction S-adenosyl-L-homocysteine + H2O = S-(5-deoxy-D-ribos-5-yl)-L-homocysteine + adenine. It catalyses the reaction S-methyl-5'-thioadenosine + H2O = 5-(methylsulfanyl)-D-ribose + adenine. The enzyme catalyses 5'-deoxyadenosine + H2O = 5-deoxy-D-ribose + adenine. It functions in the pathway amino-acid biosynthesis; L-methionine biosynthesis via salvage pathway; S-methyl-5-thio-alpha-D-ribose 1-phosphate from S-methyl-5'-thioadenosine (hydrolase route): step 1/2. Its function is as follows. Catalyzes the irreversible cleavage of the glycosidic bond in both 5'-methylthioadenosine (MTA) and S-adenosylhomocysteine (SAH/AdoHcy) to adenine and the corresponding thioribose, 5'-methylthioribose and S-ribosylhomocysteine, respectively. Also cleaves 5'-deoxyadenosine, a toxic by-product of radical S-adenosylmethionine (SAM) enzymes, into 5-deoxyribose and adenine. This Shewanella frigidimarina (strain NCIMB 400) protein is 5'-methylthioadenosine/S-adenosylhomocysteine nucleosidase.